The sequence spans 297 residues: Small ribosomal subunit protein uS2 (297 aa).

The tract at residues 276 to 297 is disordered; the sequence is DWASSAPAEGWAGEAPATEAKW.

The protein belongs to the universal ribosomal protein uS2 family. In terms of assembly, component of the small ribosomal subunit. Mature ribosomes consist of a small (40S) and a large (60S) subunit. The 40S subunit contains about 33 different proteins and 1 molecule of RNA (18S). The 60S subunit contains about 49 different proteins and 3 molecules of RNA (25S, 5.8S and 5S). Interacts with RPS21.

The protein resides in the cytoplasm. Functionally, required for the assembly and/or stability of the 40S ribosomal subunit. Required for the processing of the 20S rRNA-precursor to mature 18S rRNA in a late step of the maturation of 40S ribosomal subunits. The polypeptide is Small ribosomal subunit protein uS2 (Uncinocarpus reesii (strain UAMH 1704)).